The following is a 491-amino-acid chain: Ketol-acid reductoisomerase (NADP(+)) (491 aa).

The 194-residue stretch at 15–208 folds into the KARI N-terminal Rossmann domain; the sequence is AQLGKCRFMG…GGHRAGVLES (194 aa). Residues 45 to 48, Arg-68, Arg-76, Ser-78, and 108 to 110 each bind NADP(+); these read CGAQ and DKQ. His-132 is a catalytic residue. Residue Gly-158 coordinates NADP(+). KARI C-terminal knotted domains lie at 209 to 344 and 345 to 484; these read SFVA…TAPQ and YEGK…MTDM. 4 residues coordinate Mg(2+): Asp-217, Glu-221, Glu-389, and Glu-393. Ser-414 contacts substrate.

This sequence belongs to the ketol-acid reductoisomerase family. It depends on Mg(2+) as a cofactor.

It carries out the reaction (2R)-2,3-dihydroxy-3-methylbutanoate + NADP(+) = (2S)-2-acetolactate + NADPH + H(+). The catalysed reaction is (2R,3R)-2,3-dihydroxy-3-methylpentanoate + NADP(+) = (S)-2-ethyl-2-hydroxy-3-oxobutanoate + NADPH + H(+). The protein operates within amino-acid biosynthesis; L-isoleucine biosynthesis; L-isoleucine from 2-oxobutanoate: step 2/4. It functions in the pathway amino-acid biosynthesis; L-valine biosynthesis; L-valine from pyruvate: step 2/4. Its function is as follows. Involved in the biosynthesis of branched-chain amino acids (BCAA). Catalyzes an alkyl-migration followed by a ketol-acid reduction of (S)-2-acetolactate (S2AL) to yield (R)-2,3-dihydroxy-isovalerate. In the isomerase reaction, S2AL is rearranged via a Mg-dependent methyl migration to produce 3-hydroxy-3-methyl-2-ketobutyrate (HMKB). In the reductase reaction, this 2-ketoacid undergoes a metal-dependent reduction by NADPH to yield (R)-2,3-dihydroxy-isovalerate. This Escherichia coli O6:K15:H31 (strain 536 / UPEC) protein is Ketol-acid reductoisomerase (NADP(+)).